A 162-amino-acid polypeptide reads, in one-letter code: Haemaphysalin (162 aa).

The first 17 residues, 1–17, serve as a signal peptide directing secretion; the sequence is MHLPATIVFFTCTGVFS. The N-linked (GlcNAc...) asparagine glycan is linked to Asn57. In terms of domain architecture, BPTI/Kunitz inhibitor spans 90 to 145; it reads CLQPPETGIFDIGWSTYYVYNSRKNMCKPVKKMKFRKTTSKQKNLFNSEEECQQEC. 2 disulfide bridges follow: Cys90–Cys145 and Cys116–Cys141.

In terms of assembly, interacts with host coagulation factor XII (F12) (inactive and activated) (via fibronectin type II domain). Interacts with host high molecular weight kininogen (KNG1) (via amino acids 421-466 and 459-513). As to expression, salivary gland.

It localises to the secreted. Zn(2+) modulates binding to host coagulation factor XII (F12) and high molecular weight kininogen (KNG1). Anticoagulant protein. Inhibits activation of host plasma kallikrein-kinin system by interfering with reciprocal activation between coagulation factor XII (F12) and prekallikrein (KLKB1) without affecting their amidolytic activities. This chain is Haemaphysalin, found in Haemaphysalis longicornis (Bush tick).